A 201-amino-acid chain; its full sequence is Histidine biosynthesis bifunctional protein HisIE (201 aa).

The interval 1–111 is phosphoribosyl-AMP cyclohydrolase; sequence MKINWQKVDN…EKTTQPDWIF (111 aa). Residues 112 to 201 form a phosphoribosyl-ATP pyrophosphohydrolase region; the sequence is LSKLERLIAS…IHKLKERHTK (90 aa).

This sequence in the N-terminal section; belongs to the PRA-CH family. It in the C-terminal section; belongs to the PRA-PH family.

The protein resides in the cytoplasm. The enzyme catalyses 1-(5-phospho-beta-D-ribosyl)-ATP + H2O = 1-(5-phospho-beta-D-ribosyl)-5'-AMP + diphosphate + H(+). It carries out the reaction 1-(5-phospho-beta-D-ribosyl)-5'-AMP + H2O = 1-(5-phospho-beta-D-ribosyl)-5-[(5-phospho-beta-D-ribosylamino)methylideneamino]imidazole-4-carboxamide. The protein operates within amino-acid biosynthesis; L-histidine biosynthesis; L-histidine from 5-phospho-alpha-D-ribose 1-diphosphate: step 2/9. Its pathway is amino-acid biosynthesis; L-histidine biosynthesis; L-histidine from 5-phospho-alpha-D-ribose 1-diphosphate: step 3/9. This Pasteurella multocida (strain Pm70) protein is Histidine biosynthesis bifunctional protein HisIE (hisI).